The sequence spans 264 residues: Type II iodothyronine deiodinase (264 aa).

Residues 1 to 7 (MGLLSVD) are Lumenal-facing. A helical; Signal-anchor for type III membrane protein membrane pass occupies residues 8–28 (LLITLQILPGFFSNCLFLALY). Topologically, residues 29–264 (DSVVLVKHVL…AESGQTGTEK (236 aa)) are cytoplasmic. Residue selenocysteine 124 is part of the active site. Position 124 (selenocysteine 124) is a non-standard amino acid, selenocysteine.

It belongs to the iodothyronine deiodinase family. Predominantly monomer. Can form homodimers but homodimerization is not essential for enzyme activity. High levels seen in the metamorphosing tail.

The protein localises to the endoplasmic reticulum membrane. The catalysed reaction is 3,3',5-triiodo-L-thyronine + iodide + A + H(+) = L-thyroxine + AH2. It catalyses the reaction 3,3'-diiodo-L-thyronine + iodide + A + H(+) = 3,3',5'-triiodo-L-thyronine + AH2. The enzyme catalyses 3'-iodo-L-thyronine + iodide + A + H(+) = 3',5'-diiodo-L-thyronine + AH2. It carries out the reaction 3,3'-diiodothyronamine + iodide + A + H(+) = 3,3',5'-triiodothyronamine + AH2. The catalysed reaction is 3'-iodothyronamine + iodide + A + H(+) = 3',5'-diiodothyronamine + AH2. Its activity is regulated as follows. Not inhibited by N(6)-propylthiouracil. Functionally, plays a crucial role in the metabolism of thyroid hormones (TH) and has specific roles in TH activation and inactivation by deiodination. Catalyzes the deiodination of L-thyroxine (T4) to 3,5,3'-triiodothyronine (T3) and 3',5'-diiodothyronine (3',5'-T2) to 3'-monoiodothyronine (3'-T1) via outer-ring deiodination (ORD). Catalyzes the deiodination of 3,3',5'-triiodothyronine (rT3) to 3,3'-diiodothyronine (3,3'-T2) via ORD. Catalyzes the phenolic ring deiodinations of 3,3',5'-triiodothyronamine and 3',5'- diiodothyronamine. This Aquarana catesbeiana (American bullfrog) protein is Type II iodothyronine deiodinase (dio2).